The primary structure comprises 537 residues: Aminopeptidase Y (537 aa).

A signal peptide spans 1–21; that stretch reads MHFSLKQLAVAAFYATNLGSA. Positions 22-56 are excised as a propeptide; the sequence is YVIPQFFQEAFQQEEPIENYLPQLNDDDSSAVAAN. N85, N96, N115, N150, and N162 each carry an N-linked (GlcNAc...) asparagine glycan. Positions 314 and 326 each coordinate Zn(2+). The active-site Proton acceptor is the E358. E359 lines the Zn(2+) pocket. N371 carries N-linked (GlcNAc...) asparagine glycosylation. D387 is a Zn(2+) binding site. A glycan (N-linked (GlcNAc...) asparagine) is linked at N427. H472 serves as a coordination point for Zn(2+). N-linked (GlcNAc...) asparagine glycosylation is present at N480.

The protein belongs to the peptidase M28 family. M28A subfamily. In terms of assembly, monomer. It depends on Zn(2+) as a cofactor.

The protein resides in the vacuole. The enzyme catalyses Preferentially, release of N-terminal lysine.. This Saccharomyces cerevisiae (strain ATCC 204508 / S288c) (Baker's yeast) protein is Aminopeptidase Y (APE3).